A 631-amino-acid chain; its full sequence is Coiled-coil domain-containing protein 93 (631 aa).

Disordered regions lie at residues 1 to 23 (MGLPRGPEGQGLPEVETREDEEQ) and 214 to 243 (QSKMEKAEDKKTALPAGLSATEKADAHEED). The sufficient for interaction with CCDC22 stretch occupies residues 1–430 (MGLPRGPEGQ…LKAERAPRGD (430 aa)). A compositionally biased stretch (basic and acidic residues) spans 215–225 (SKMEKAEDKKT). S298, S301, and S305 each carry phosphoserine. Residues 309–631 (LGTSQLHRRK…LLSKVKAKAS (323 aa)) are a coiled coil. Positions 421-433 (LKAERAPRGDEKT) are enriched in basic and acidic residues. Positions 421-447 (LKAERAPRGDEKTLSSGEPPGTLTSAM) are disordered. The segment at 448-631 (THDEDLDRRY…LLSKVKAKAS (184 aa)) is sufficient for interaction with WASHC2C.

This sequence belongs to the CCDC93 family. In terms of assembly, component of the commander complex consisting of the CCC subcomplex and the retriever subcomplex. Component of the CCC (COMMD/CCDC22/CCDC93) subcomplex consisting of COMMD1, COMMD2, COMMD3, COMMD4, COMMD5, COMMD6, COMMD7, COMMD8, COMMD9, COMMD10, CCDC22 and CCDC93. Forms a coiled-coil heterodimer with CCDC22; this heterodimer interacts with the guanine nucleotide exchange factor DENND10; the interaction is direct. Interacts with WASHC1. Interacts directly with WASHC2C. Interacts with SNX17 and SNX31.

The protein resides in the early endosome. Functionally, component of the commander complex that is essential for endosomal recycling of transmembrane cargos; the commander complex is composed of composed of the CCC subcomplex and the retriever subcomplex. Component of the CCC complex, which is involved in the regulation of endosomal recycling of surface proteins, including integrins, signaling receptor and channels. The CCC complex associates with SNX17, retriever and WASH complexes to prevent lysosomal degradation and promote cell surface recycling of numerous cargos such as integrins ITGA5:ITGB1. Involved in copper-dependent ATP7A trafficking between the trans-Golgi network and vesicles in the cell periphery; the function is proposed to depend on its association within the CCC complex and cooperation with the WASH complex on early endosomes and is dependent on its interaction with WASHC2C. Its function is as follows. (Microbial infection) The CCC complex, in collaboration with the heterotrimeric retriever complex, mediates the exit of human papillomavirus to the cell surface. The protein is Coiled-coil domain-containing protein 93 (CCDC93) of Homo sapiens (Human).